Consider the following 288-residue polypeptide: Ribonuclease HIII (288 aa).

In terms of domain architecture, RNase H type-2 spans Tyr76 to Asn288. Positions 82, 83, and 185 each coordinate a divalent metal cation.

It belongs to the RNase HII family. RnhC subfamily. It depends on Mn(2+) as a cofactor. The cofactor is Mg(2+).

It localises to the cytoplasm. It catalyses the reaction Endonucleolytic cleavage to 5'-phosphomonoester.. In terms of biological role, endonuclease that specifically degrades the RNA of RNA-DNA hybrids. This Phytoplasma mali (strain AT) protein is Ribonuclease HIII.